We begin with the raw amino-acid sequence, 734 residues long: Photosystem I P700 chlorophyll a apoprotein A2 (734 aa).

The next 8 helical transmembrane spans lie at 46–69 (IFAS…FHVA), 135–158 (LYTG…LHLQ), 175–199 (LNHH…HVAI), 273–291 (IAHH…GHMY), 330–353 (LHFQ…QHIY), 369–395 (AALY…IFFI), 417–439 (AIIS…LYVH), and 517–535 (FLVH…LILV). 2 residues coordinate [4Fe-4S] cluster: Cys559 and Cys568. Helical transmembrane passes span 575–596 (AFYL…YWHW) and 643–665 (LSVW…MFLI). Chlorophyll a is bound by residues His654, Met662, and Tyr670. Position 671 (Trp671) interacts with phylloquinone. A helical transmembrane segment spans residues 707–727 (LVGLAHFSVGYIFTYAAFLIA).

The protein belongs to the PsaA/PsaB family. The PsaA/B heterodimer binds the P700 chlorophyll special pair and subsequent electron acceptors. PSI consists of a core antenna complex that captures photons, and an electron transfer chain that converts photonic excitation into a charge separation. The eukaryotic PSI reaction center is composed of at least 11 subunits. Requires P700 is a chlorophyll a/chlorophyll a' dimer, A0 is one or more chlorophyll a, A1 is one or both phylloquinones and FX is a shared 4Fe-4S iron-sulfur center. as cofactor.

It localises to the plastid. Its subcellular location is the chloroplast thylakoid membrane. It carries out the reaction reduced [plastocyanin] + hnu + oxidized [2Fe-2S]-[ferredoxin] = oxidized [plastocyanin] + reduced [2Fe-2S]-[ferredoxin]. Its function is as follows. PsaA and PsaB bind P700, the primary electron donor of photosystem I (PSI), as well as the electron acceptors A0, A1 and FX. PSI is a plastocyanin-ferredoxin oxidoreductase, converting photonic excitation into a charge separation, which transfers an electron from the donor P700 chlorophyll pair to the spectroscopically characterized acceptors A0, A1, FX, FA and FB in turn. Oxidized P700 is reduced on the lumenal side of the thylakoid membrane by plastocyanin. The polypeptide is Photosystem I P700 chlorophyll a apoprotein A2 (Staurastrum punctulatum (Green alga)).